A 649-amino-acid polypeptide reads, in one-letter code: Quinol oxidase subunit 1 (649 aa).

Residues 1-15 are Extracellular-facing; the sequence is MKFKWDEFFVTGDPL. The helical transmembrane segment at 16-34 threads the bilayer; it reads ILGAQVSIALSTIAIIFVL. The Cytoplasmic portion of the chain corresponds to 35-56; sequence TYFKKWKWLWSEWITTVDHKKL. A helical membrane pass occupies residues 57 to 75; the sequence is GIMYIISAVIMLFRGGVDG. Residues 76-97 lie on the Extracellular side of the membrane; sequence LMMRAQLALPNNSFLDSNHYNE. A helical membrane pass occupies residues 98 to 117; the sequence is IFTTHGTIMIIFMAMPFLIG. H102 serves as a coordination point for Fe(II)-heme a. The Cytoplasmic portion of the chain corresponds to 118-139; that stretch reads LINVVVPLQIGARDVAFPYLNN. The helical transmembrane segment at 140–157 threads the bilayer; sequence LSFWTFFVGAMLFNISFV. Residues 158–190 are Extracellular-facing; sequence IGGSPNAGWTSYMPLASNDMSPGPGENYYLLGL. Residues 191-209 traverse the membrane as a helical segment; sequence QIAGIGTLMTGINFMVTIL. The Cytoplasmic portion of the chain corresponds to 210-227; the sequence is KMRTKGMTLMRMPMFTWT. A helical transmembrane segment spans residues 228 to 246; that stretch reads TLITMVIIVFAFPVLTVAL. Topologically, residues 247-272 are extracellular; the sequence is ALLSFDRLFGAHFFTLEAGGMPMLWA. The chain crosses the membrane as a helical span at residues 273–292; the sequence is NLFWIWGHPEVYIVILPAFG. Positions 280 and 284 each coordinate Cu cation. A cross-link (1'-histidyl-3'-tyrosine (His-Tyr)) is located at residues 280-284; it reads HPEVY. Residues 293 to 315 lie on the Cytoplasmic side of the membrane; it reads IFSEIISSFARKQLFGYKAMVGS. Residues 316–335 form a helical membrane-spanning segment; it reads IIAISVLSFLVWTHHFFTMG. Cu cation-binding residues include H329 and H330. Residues 336–343 lie on the Extracellular side of the membrane; sequence NSASVNSF. A helical transmembrane segment spans residues 344 to 362; that stretch reads FSITTMAISIPTGVKIFNW. The Cytoplasmic segment spans residues 363–377; it reads LFTMYKGRISFTTPM. The chain crosses the membrane as a helical span at residues 378 to 397; the sequence is LWALAFIPNFVIGGVTGVML. Residues 398-405 lie on the Extracellular side of the membrane; that stretch reads AMAAADYQ. Residues 406–425 form a helical membrane-spanning segment; sequence YHNTYFLVSHFHYVLIAGTV. A heme a3-binding site is contributed by H415. Position 417 (H417) interacts with Fe(II)-heme a. Residues 426 to 452 lie on the Cytoplasmic side of the membrane; sequence FACFAGFIFWYPKMFGHKLNERIGKWF. A helical transmembrane segment spans residues 453 to 472; that stretch reads FWIFMIGFNICFFPQYFLGL. Residues 473–490 lie on the Extracellular side of the membrane; sequence QGMPRRIYTYGPNDGWTT. The chain crosses the membrane as a helical span at residues 491–510; that stretch reads LNFISTVGAFMMGVGFLILC. Over 511-584 the chain is Cytoplasmic; it reads YNIYYSFRYS…SKFKKIHMPS (74 aa). Residues 585–604 form a helical membrane-spanning segment; that stretch reads NSGRPFFMSVAFGLAGFGLV. Over 605–610 the chain is Extracellular; the sequence is FEWYWM. Residues 611–631 form a helical membrane-spanning segment; sequence GVVGLIGVLLCMVLRSFEYDN. Residues 632-649 are Cytoplasmic-facing; sequence GYYISVDEIKETERKISE.

The protein belongs to the heme-copper respiratory oxidase family. Cu cation is required as a cofactor. The cofactor is ferriheme a. Requires Heme A3. as cofactor.

It is found in the cell membrane. The enzyme catalyses 2 a quinol + O2 = 2 a quinone + 2 H2O. The protein operates within energy metabolism; oxidative phosphorylation. Functionally, catalyzes quinol oxidation with the concomitant reduction of oxygen to water. Major component for energy conversion during vegetative growth. The polypeptide is Quinol oxidase subunit 1 (qoxB) (Bacillus subtilis (strain 168)).